The chain runs to 82 residues: Omega-conotoxin-like 9 (82 aa).

An N-terminal signal peptide occupies residues 1 to 22 (MKLTCMMIAAVLFLTTWTFVTA). Residues 23 to 51 (DDSRYGLKNLFPKARHEMKNPEASKLNKR) constitute a propeptide that is removed on maturation. Disulfide bonds link C54/C69, C61/C73, and C68/C77.

The protein belongs to the conotoxin O1 superfamily. As to expression, expressed by the venom duct.

The protein resides in the secreted. Omega-conotoxins act at presynaptic membranes, they bind and block voltage-gated calcium channels (Cav). The sequence is that of Omega-conotoxin-like 9 from Conus striatus (Striated cone).